A 317-amino-acid polypeptide reads, in one-letter code: Uridine phosphorylase 2 (317 aa).

Phosphate contacts are provided by residues glycine 66, arginine 100, and 144–147; that span reads RIGT. The cysteines at positions 95 and 102 are disulfide-linked. Uridine contacts are provided by residues 148-149 and 223-225; these read SG and QGR.

The protein belongs to the PNP/UDP phosphorylase family. As to quaternary structure, homodimer. Predominantly expressed in kidney.

The enzyme catalyses uridine + phosphate = alpha-D-ribose 1-phosphate + uracil. It catalyses the reaction 2'-deoxyuridine + phosphate = 2-deoxy-alpha-D-ribose 1-phosphate + uracil. It participates in pyrimidine metabolism; UMP biosynthesis via salvage pathway; uracil from uridine (phosphorylase route): step 1/1. Its activity is regulated as follows. A conditional disulfide bridge can form within the protein that dislocates a critical phosphate-coordinating arginine Arg-100 away from the active site, disabling the enzyme. Its function is as follows. Catalyzes the reversible phosphorylytic cleavage of uridine to uracil and ribose-1-phosphate which can then be utilized as carbon and energy sources or in the rescue of pyrimidine bases for nucleotide synthesis. Shows broad substrate specificity and can also accept deoxyuridine and other analogous compounds. This Homo sapiens (Human) protein is Uridine phosphorylase 2.